Consider the following 488-residue polypeptide: Coagulation factor X (488 aa).

Positions 1–31 are cleaved as a signal peptide; that stretch reads MGRPLHLVLLSASLAGLLLLGESLFIRREQA. A propeptide spanning residues 32–40 is cleaved from the precursor; the sequence is NNILARVTR. One can recognise a Gla domain in the interval 41–85; the sequence is ANSFLEEMKKGHLERECMEETCSYEEAREVFEDSDKTNEFWNKYK. A 4-carboxyglutamate mark is found at Glu-46, Glu-47, Glu-54, Glu-56, Glu-59, Glu-60, Glu-65, Glu-66, Glu-69, Glu-72, and Glu-79. An intrachain disulfide couples Cys-57 to Cys-62. In terms of domain architecture, EGF-like 1; calcium-binding spans 86-122; sequence DGDQCETSPCQNQGKCKDGLGEYTCTCLEGFEGKNCE. Disulfide bonds link Cys-90–Cys-101, Cys-95–Cys-110, Cys-112–Cys-121, Cys-129–Cys-140, Cys-136–Cys-149, Cys-151–Cys-164, Cys-172–Cys-342, Cys-241–Cys-246, Cys-261–Cys-277, Cys-390–Cys-404, and Cys-415–Cys-443. (3R)-3-hydroxyaspartate is present on Asp-103. The region spanning 125–165 is the EGF-like 2 domain; it reads TRKLCSLDNGDCDQFCHEEQNSVVCSCARGYTLADNGKACI. The O-glycosylated at one site stretch occupies residues 183–203; sequence SVAQATSSSGEAPDSITWKPY. The propeptide at 183-234 is activation peptide; sequence SVAQATSSSGEAPDSITWKPYDAADLDPTENPFDLLDFNQTQPERGDNNLTR. Residues Thr-199 and Thr-211 are each glycosylated (O-linked (GalNAc...) threonine). Asn-221 and Asn-231 each carry an N-linked (GlcNAc...) asparagine glycan. The Peptidase S1 domain maps to 235 to 467; that stretch reads IVGGQECKDG…FLKWIDRSMK (233 aa). Residues His-276 and Asp-322 each act as charge relay system in the active site. Ser-419 acts as the Charge relay system in catalysis. Residues 476–485 form an O-glycosylated at one site region; sequence SHAPEVITSS.

The protein belongs to the peptidase S1 family. As to quaternary structure, the two chains are formed from a single-chain precursor by the excision of two Arg residues and are held together by 1 or more disulfide bonds. Forms a heterodimer with SERPINA5. Interacts (inactive and activated) with ixolaris, an anticoagulant protein from Ixodes scapularis saliva. Interacts (activated) with iripin-8, a serine protease inhibitor from Ixodes ricinus saliva. Interacts (activated) with FXa-directed anticoagulant from Aedes albopictus saliva. Interacts (activated) with guianensin, an anticoagulant protein from Simulium guianense saliva. Interacts (activated) with simukunin, an anticoagulant protein from Simulium vittatum saliva. In terms of processing, the vitamin K-dependent, enzymatic carboxylation of some glutamate residues allows the modified protein to bind calcium. Post-translationally, N- and O-glycosylated. O-glycosylated with core 1 or possibly core 8 glycans. Proteolytically cleaved and activated by cathepsin CTSG. The activation peptide is cleaved by factor IXa (in the intrinsic pathway), or by factor VIIa (in the extrinsic pathway). In terms of processing, the iron and 2-oxoglutarate dependent 3-hydroxylation of aspartate and asparagine is (R) stereospecific within EGF domains. As to expression, plasma; synthesized in the liver.

The protein localises to the secreted. It catalyses the reaction Selective cleavage of Arg-|-Thr and then Arg-|-Ile bonds in prothrombin to form thrombin.. With respect to regulation, inhibited by SERPINA5 and SERPINA10. In terms of biological role, factor Xa is a vitamin K-dependent glycoprotein that converts prothrombin to thrombin in the presence of factor Va, calcium and phospholipid during blood clotting. Factor Xa activates pro-inflammatory signaling pathways in a protease-activated receptor (PAR)-dependent manner. Up-regulates expression of protease-activated receptors (PARs) F2R, F2RL1 and F2RL2 in dermal microvascular endothelial cells. Triggers the production of pro-inflammatory cytokines, such as MCP-1/CCL2 and IL6, in cardiac fibroblasts and umbilical vein endothelial cells in PAR-1/F2R-dependent manner. Triggers the production of pro-inflammatory cytokines, such as MCP-1/CCL2, IL6, TNF-alpha/TNF, IL-1beta/IL1B, IL8/CXCL8 and IL18, in endothelial cells and atrial tissues. Induces expression of adhesion molecules, such as ICAM1, VCAM1 and SELE, in endothelial cells and atrial tissues. Increases expression of phosphorylated ERK1/2 in dermal microvascular endothelial cells and atrial tissues. Triggers activation of the transcription factor NF-kappa-B in dermal microvascular endothelial cells and atrial tissues. Activates pro-inflammatory and pro-fibrotic responses in dermal fibroblasts and enhances wound healing probably via PAR-2/F2RL1-dependent mechanism. Activates barrier protective signaling responses in endothelial cells in PAR-2/F2RL1-dependent manner; the activity depends on the cleavage of PAR-2/F2RL1 by factor Xa. Up-regulates expression of plasminogen activator inhibitor 1 (SERPINE1) in atrial tissues. The protein is Coagulation factor X (F10) of Homo sapiens (Human).